The primary structure comprises 288 residues: Serine/threonine-protein phosphatase PGAM5, mitochondrial (288 aa).

Topologically, residues 1 to 6 (MAFRQA) are mitochondrial matrix. A helical membrane pass occupies residues 7–29 (LQLAACGLAGGSAAVLFSAVAVG). Residues 30–288 (KPRGGGDADT…FMPPDKITRS (259 aa)) are Mitochondrial intermembrane-facing. The interaction with KEAP1 stretch occupies residues 76–81 (NVESGE). 2 positions are modified to phosphoserine: S79 and S86. N6-acetyllysine is present on residues K115, K143, and K190.

The protein belongs to the phosphoglycerate mutase family. BPG-dependent PGAM subfamily. As to quaternary structure, dimer. Forms a ternary complex with NFE2L2 and KEAP1. Interacts with BCL2L1 and MAP3K5. Upon TNF-induced necrosis, forms in complex with RIPK1, RIPK3 and MLKL; the formation of this complex leads to PGAM5 phosphorylation. Isoform 2, but not isoform 1, interacts with DNM1L; this interaction leads to DNM1L dephosphorylation and activation and eventually to mitochondria fragmentation. In terms of processing, phosphorylated by the RIPK1/RIPK3 complex under necrotic conditions. This phosphorylation increases PGAM5 phosphatase activity. Proteolytically cleaved by PARL in response to loss of mitochondrial membrane potential.

The protein resides in the mitochondrion outer membrane. Its subcellular location is the mitochondrion inner membrane. The catalysed reaction is O-phospho-L-seryl-[protein] + H2O = L-seryl-[protein] + phosphate. It catalyses the reaction O-phospho-L-threonyl-[protein] + H2O = L-threonyl-[protein] + phosphate. Its function is as follows. Mitochondrial serine/threonine phosphatase that dephosphorylates various substrates and thus plays a role in different biological processes including cellular senescence or mitophagy. Modulates cellular senescence by regulating mitochondrial dynamics. Mechanistically, participates in mitochondrial fission through dephosphorylating DNM1L/DRP1. Additionally, dephosphorylates MFN2 in a stress-sensitive manner and consequently protects it from ubiquitination and degradation to promote mitochondrial network formation. Regulates mitophagy independent of PARKIN by interacting with and dephosphorylating FUNDC1, which interacts with LC3. Regulates anti-oxidative response by forming a tertiary complex with KEAP1 and NRF2. Regulates necroptosis by acting as a RIPK3 target and recruiting the RIPK1-RIPK3-MLKL necrosis 'attack' complex to mitochondria. The protein is Serine/threonine-protein phosphatase PGAM5, mitochondrial (Pgam5) of Mus musculus (Mouse).